A 376-amino-acid polypeptide reads, in one-letter code: Copper-containing nitrite reductase (376 aa).

A signal peptide (tat-type signal) is located at residues 1-33 (MAEQMQISRRTILAGAALAGALAPVLATTSAWG). Residue Q34 is modified to Pyrrolidone carboxylic acid. 2 Plastocyanin-like domains span residues 34–211 (QGAV…YDKI) and 212–376 (YYVG…PSGT). 7 residues coordinate Cu cation: H131, H136, H171, C172, H181, M186, and H342.

This sequence belongs to the multicopper oxidase family. In terms of assembly, homotrimer. Cu(2+) serves as cofactor. Requires Cu(+) as cofactor. It depends on FAD as a cofactor. In terms of processing, predicted to be exported by the Tat system. The position of the signal peptide cleavage has been experimentally proven.

The protein localises to the periplasm. The catalysed reaction is nitric oxide + Fe(III)-[cytochrome c] + H2O = Fe(II)-[cytochrome c] + nitrite + 2 H(+). Its pathway is nitrogen metabolism; nitrate reduction (denitrification); dinitrogen from nitrate: step 2/4. The sequence is that of Copper-containing nitrite reductase (nirK) from Alcaligenes faecalis.